The sequence spans 400 residues: Ubiquitin-like modifier-activating enzyme 5 (400 aa).

Positions 76, 97, 120, 143, and 177 each coordinate ATP. Residues Cys219 and Cys222 each contribute to the Zn(2+) site. Cys243 functions as the Glycyl thioester intermediate in the catalytic mechanism. The Zn(2+) site is built by Cys296 and Cys301.

This sequence belongs to the ubiquitin-activating E1 family. UBA5 subfamily.

E1-like enzyme which activates UFM1. This Drosophila virilis (Fruit fly) protein is Ubiquitin-like modifier-activating enzyme 5.